We begin with the raw amino-acid sequence, 883 residues long: Protein P (883 aa).

Residues methionine 1–glutamine 183 are terminal protein domain (TP). The segment at leucine 184–leucine 386 is spacer. The tract at residues arginine 298–serine 344 is disordered. The interval aspartate 387–glutamine 728 is polymerase/reverse transcriptase domain (RT). The Reverse transcriptase domain occupies aspartate 397–isoleucine 638. Residues aspartate 469, aspartate 589, and aspartate 590 each coordinate Mg(2+).

It belongs to the hepadnaviridae P protein family.

It catalyses the reaction DNA(n) + a 2'-deoxyribonucleoside 5'-triphosphate = DNA(n+1) + diphosphate. The catalysed reaction is Endonucleolytic cleavage to 5'-phosphomonoester.. With respect to regulation, activated by host HSP70 and HSP40 in vitro to be able to bind the epsilon loop of the pgRNA. Because deletion of the RNase H region renders the protein partly chaperone-independent, the chaperones may be needed indirectly to relieve occlusion of the RNA-binding site by this domain. Inhibited by several reverse-transcriptase inhibitors: Lamivudine, Adefovir and Entecavir. In terms of biological role, multifunctional enzyme that converts the viral RNA genome into dsDNA in viral cytoplasmic capsids. This enzyme displays a DNA polymerase activity that can copy either DNA or RNA templates, and a ribonuclease H (RNase H) activity that cleaves the RNA strand of RNA-DNA heteroduplexes in a partially processive 3'- to 5'-endonucleasic mode. Neo-synthesized pregenomic RNA (pgRNA) are encapsidated together with the P protein, and reverse-transcribed inside the nucleocapsid. Initiation of reverse-transcription occurs first by binding the epsilon loop on the pgRNA genome, and is initiated by protein priming, thereby the 5'-end of (-)DNA is covalently linked to P protein. Partial (+)DNA is synthesized from the (-)DNA template and generates the relaxed circular DNA (RC-DNA) genome. After budding and infection, the RC-DNA migrates in the nucleus, and is converted into a plasmid-like covalently closed circular DNA (cccDNA). The activity of P protein does not seem to be necessary for cccDNA generation, and is presumably released from (+)DNA by host nuclear DNA repair machinery. The protein is Protein P of Woodchuck hepatitis B virus (isolate 2) (WHV).